Consider the following 476-residue polypeptide: Lactate utilization protein B (476 aa).

4Fe-4S ferredoxin-type domains lie at 304 to 334 (GGEFQPILQCIRCAACVNACPVYRHVGGHTY) and 353 to 382 (YDDFKELPYASTLCGACTDACPVKIPLHQL). [4Fe-4S] cluster is bound by residues C313, C316, C319, C323, C366, C369, and C373. The interval 452 to 476 (RDFPAPNKNSFRNWMKHRTKGDEES) is disordered.

The protein belongs to the LutB/YkgF family.

In terms of biological role, is involved in L-lactate degradation and allows cells to grow with lactate as the sole carbon source. Has probably a role as an electron transporter during oxidation of L-lactate. The chain is Lactate utilization protein B from Lysinibacillus sphaericus (strain C3-41).